A 185-amino-acid chain; its full sequence is Elongation factor P (185 aa).

It belongs to the elongation factor P family.

The protein resides in the cytoplasm. Its pathway is protein biosynthesis; polypeptide chain elongation. In terms of biological role, involved in peptide bond synthesis. Stimulates efficient translation and peptide-bond synthesis on native or reconstituted 70S ribosomes in vitro. Probably functions indirectly by altering the affinity of the ribosome for aminoacyl-tRNA, thus increasing their reactivity as acceptors for peptidyl transferase. The protein is Elongation factor P of Desulfovibrio desulfuricans (strain ATCC 27774 / DSM 6949 / MB).